The primary structure comprises 738 residues: 1,4-alpha-glucan branching enzyme GlgB (738 aa).

Asp399 (nucleophile) is an active-site residue. Glu452 serves as the catalytic Proton donor.

It belongs to the glycosyl hydrolase 13 family. GlgB subfamily. As to quaternary structure, monomer.

The enzyme catalyses Transfers a segment of a (1-&gt;4)-alpha-D-glucan chain to a primary hydroxy group in a similar glucan chain.. It participates in glycan biosynthesis; glycogen biosynthesis. Its function is as follows. Catalyzes the formation of the alpha-1,6-glucosidic linkages in glycogen by scission of a 1,4-alpha-linked oligosaccharide from growing alpha-1,4-glucan chains and the subsequent attachment of the oligosaccharide to the alpha-1,6 position. In Chlamydia trachomatis serovar A (strain ATCC VR-571B / DSM 19440 / HAR-13), this protein is 1,4-alpha-glucan branching enzyme GlgB.